The primary structure comprises 396 residues: L-cysteine desulfidase (396 aa).

Cysteine 23 serves as the catalytic Proton acceptor. Cysteine 288, cysteine 330, and cysteine 337 together coordinate [4Fe-4S] cluster.

The protein belongs to the L-cysteine desulfidase family. As to quaternary structure, homotrimer. Requires [4Fe-4S] cluster as cofactor.

The catalysed reaction is L-cysteine + H2O = hydrogen sulfide + pyruvate + NH4(+) + H(+). Its function is as follows. Catalyzes the cleavage of L-cysteine to form 2-aminoprop-2-enoate and sulfide. The former then spontaneously hydrolyzes to pyruvate and NH(3). May be responsible for the production of sulfide required for the biosynthesis of iron-sulfur centers in this archaea. The polypeptide is L-cysteine desulfidase (Methanococcus maripaludis (strain C6 / ATCC BAA-1332)).